Consider the following 145-residue polypeptide: Hemoglobin subunit beta-A (145 aa).

The Globin domain maps to 1 to 145 (MLTAEEKAAV…VANALAHRYH (145 aa)). The heme b site is built by His-62 and His-91.

This sequence belongs to the globin family. As to quaternary structure, heterotetramer of two alpha chains and two beta chains. In terms of tissue distribution, red blood cells.

Its function is as follows. Involved in oxygen transport from the lung to the various peripheral tissues. This chain is Hemoglobin subunit beta-A, found in Bos javanicus (Wild banteng).